Here is a 793-residue protein sequence, read N- to C-terminus: Facilitated trehalose transporter Tret1 (793 aa).

Topologically, residues 1-326 (MNRKVGPVLE…LEVYRPTTNP (326 aa)) are cytoplasmic. 2 disordered regions span residues 99-148 (EKAK…EHKS) and 213-235 (RHIS…FEPS). Residues 104–113 (KSSLKSSRVS) show a composition bias toward low complexity. Over residues 115–125 (DQEDDRFDEDE) the composition is skewed to acidic residues. The span at 213–223 (RHISFKFDKEP) shows a compositional bias: basic and acidic residues. The chain crosses the membrane as a helical span at residues 327-347 (IYIWTQVLAALSVSLGSMVVG). Residues 348-376 (FSSAYTSPALVSMKDRNITSFEVTDQSGS) lie on the Extracellular side of the membrane. N-linked (GlcNAc...) asparagine glycosylation occurs at asparagine 364. Residues 377 to 397 (WVGGIMPLAGLAGGILGGPMI) form a helical membrane-spanning segment. The Cytoplasmic segment spans residues 398 to 411 (EYLGRKNTILATAT). Residues 412-432 (PFIISWLLIGCATHVAMVLVG) form a helical membrane-spanning segment. The Extracellular portion of the chain corresponds to 433 to 434 (RA). The helical transmembrane segment at 435-455 (LSGLCVGIASLSLPVYLGETV) threads the bilayer. At 456–460 (QPEVR) the chain is on the cytoplasmic side. A helical transmembrane segment spans residues 461-481 (GTLGLLPTAFGNIGILLCFVA). The Extracellular segment spans residues 482–488 (GKYLDWS). The helical transmembrane segment at 489–509 (GLAFLGAALPIPFLLLMFLIP) threads the bilayer. The Cytoplasmic segment spans residues 510-572 (ETPRWYVSRN…DLLNKANLKP (63 aa)). The helical transmembrane segment at 573–593 (LLISLGLMFFQQLSGINAVIF) threads the bilayer. Topologically, residues 594–609 (YTVQIFQSAGSTIDEK) are extracellular. A helical transmembrane segment spans residues 610–630 (LCTIIVGVVNFIATFIATVLI). The Cytoplasmic segment spans residues 631–636 (DRLGRK). The chain crosses the membrane as a helical span at residues 637 to 657 (ILLYISDVAMIITLMTLGTFF). Over 658–668 (YMKNNGDDVSE) the chain is Extracellular. Residues 669–689 (IGWLPLAAFVVFVVGFSLGFG) form a helical membrane-spanning segment. Residues 690–703 (PIPWLMMGEILPGK) are Cytoplasmic-facing. A helical transmembrane segment spans residues 704–724 (IRGSAASVATAFNWSCTFVVT). At 725–737 (KTFADITASIGNH) the chain is on the extracellular side. A helical membrane pass occupies residues 738–758 (GAFWMFGSICIVGLLFVIVYV). Residues 759–793 (PETQGKSLEDIERKMMGRVRRMSSVANIKPLSFNM) are Cytoplasmic-facing.

This sequence belongs to the major facilitator superfamily. Sugar transporter (TC 2.A.1.1) family. Trehalose transporter subfamily.

The protein resides in the cell membrane. High-capacity facilitative transporter for trehalose. Does not transport maltose, sucrose or lactose. Mediates the bidirectional transfer of trehalose. Responsible for the transport of trehalose synthesized in the fat body and the incorporation of trehalose into other tissues that require a carbon source, thereby regulating trehalose levels in the hemolymph. This is Facilitated trehalose transporter Tret1 from Anopheles gambiae (African malaria mosquito).